Reading from the N-terminus, the 457-residue chain is MTQLSVVILAAGKGTRMYSDLPKVLHTVAGKPMVQHVIDTAKQIDAKQIHLIYGHGGELLQQRLSSEPVNWVLQAEQLGTGHAMQQAAPFFADDENILMLYGDAPLITKETLERLIAAKPANGIALLTVELENPTGYGRIIRENGSVVAIVEQKDANAEQLKIREVNTGVMVASGASFKKWLANLNNNNAQGEYYITDVIAMANQDGYKVQAVQASEFMEVEGANNRLQLAALERFYQKTQAEKLLLAGVRLIDPARFDIRGSLTHGKDVEIDVNVIIEGEVKLGNRVRIGAGCVLKNCEIGDDVEIKPYSVIEDAVVGKAAQIGPFSRLRPGANLAEETHVGNFVEIKNAQVGKGSKVNHLTYVGDAEVGSNCNIGAGVITCNYDGANKFKTIIGNNVFVGSDSQLVAPVTIADGATIGAGATVTKDVAENELVISRVPQRHIQGWQRPTKKKIAD.

The pyrophosphorylase stretch occupies residues Met1 to Arg227. UDP-N-acetyl-alpha-D-glucosamine contacts are provided by residues Leu9–Gly12, Lys23, Gln74, Gly79–Thr80, Tyr101–Asp103, Gly138, Glu152, Asn167, and Asn225. Asp103 is a Mg(2+) binding site. Asn225 is a binding site for Mg(2+). Residues Leu228–Ala248 form a linker region. The tract at residues Gly249 to Asp457 is N-acetyltransferase. Positions 331 and 349 each coordinate UDP-N-acetyl-alpha-D-glucosamine. His361 functions as the Proton acceptor in the catalytic mechanism. Positions 364 and 375 each coordinate UDP-N-acetyl-alpha-D-glucosamine. Acetyl-CoA contacts are provided by residues Ala378, Asn384–Tyr385, Ser403, Ala421, and Arg438.

In the N-terminal section; belongs to the N-acetylglucosamine-1-phosphate uridyltransferase family. It in the C-terminal section; belongs to the transferase hexapeptide repeat family. As to quaternary structure, homotrimer. The cofactor is Mg(2+).

Its subcellular location is the cytoplasm. The catalysed reaction is alpha-D-glucosamine 1-phosphate + acetyl-CoA = N-acetyl-alpha-D-glucosamine 1-phosphate + CoA + H(+). It carries out the reaction N-acetyl-alpha-D-glucosamine 1-phosphate + UTP + H(+) = UDP-N-acetyl-alpha-D-glucosamine + diphosphate. Its pathway is nucleotide-sugar biosynthesis; UDP-N-acetyl-alpha-D-glucosamine biosynthesis; N-acetyl-alpha-D-glucosamine 1-phosphate from alpha-D-glucosamine 6-phosphate (route II): step 2/2. It functions in the pathway nucleotide-sugar biosynthesis; UDP-N-acetyl-alpha-D-glucosamine biosynthesis; UDP-N-acetyl-alpha-D-glucosamine from N-acetyl-alpha-D-glucosamine 1-phosphate: step 1/1. It participates in bacterial outer membrane biogenesis; LPS lipid A biosynthesis. Its function is as follows. Catalyzes the last two sequential reactions in the de novo biosynthetic pathway for UDP-N-acetylglucosamine (UDP-GlcNAc). The C-terminal domain catalyzes the transfer of acetyl group from acetyl coenzyme A to glucosamine-1-phosphate (GlcN-1-P) to produce N-acetylglucosamine-1-phosphate (GlcNAc-1-P), which is converted into UDP-GlcNAc by the transfer of uridine 5-monophosphate (from uridine 5-triphosphate), a reaction catalyzed by the N-terminal domain. This is Bifunctional protein GlmU from Actinobacillus pleuropneumoniae serotype 5b (strain L20).